We begin with the raw amino-acid sequence, 455 residues long: MAKKTERAFSCVGCGYVHPKWLGRCPECGEWNSFEETPSLSSGDVRAVKKASSSPVQAFPLCAVRAQDAQRISCGIAEFDRVLGGGAVRRSAIMIGGEPGIGKSTLLLQIAAACGKSVLYVSGEESPGQIRGRADRLNIPIQNIELLCATRVEDVERVLNTRCPTFVIVDSIQTVFSPEAGAIPMTINQLKYCANELIAWVKERDSVLFFTAHVTKDGNIAGPKVVEHMVDTVISFERNEEDIRFLRALKNRFGSVDELGIFTMGENGLSAVQDTAGFFISTRQGMFPVGSATVPVCEGSRVFMVEIQALTVPAKSSVTRVFSDRIDSARVSRVAAVIEKRVGLKFSDQDIYVNVAGGIRLYEPAVDVALAMALYSARQNTPVKTNAAFIGEVSLSGEIRPVRRLKTRLKTAYGLGFSTIYVPIGVEHDTPPPYTLRVVGTLAQTIAEIFSKAKA.

Residues 11-28 form a C4-type zinc finger; that stretch reads CVGCGYVHPKWLGRCPEC. Residue 97-104 coordinates ATP; the sequence is GEPGIGKS. The RadA KNRFG motif motif lies at 250 to 254; the sequence is KNRFG. The lon-protease-like stretch occupies residues 350–455; it reads DIYVNVAGGI…IAEIFSKAKA (106 aa).

This sequence belongs to the RecA family. RadA subfamily.

Functionally, DNA-dependent ATPase involved in processing of recombination intermediates, plays a role in repairing DNA breaks. Stimulates the branch migration of RecA-mediated strand transfer reactions, allowing the 3' invading strand to extend heteroduplex DNA faster. Binds ssDNA in the presence of ADP but not other nucleotides, has ATPase activity that is stimulated by ssDNA and various branched DNA structures, but inhibited by SSB. Does not have RecA's homology-searching function. The sequence is that of DNA repair protein RadA from Treponema pallidum (strain Nichols).